Reading from the N-terminus, the 196-residue chain is Serine recombinase PinR (196 aa).

The Resolvase/invertase-type recombinase catalytic domain maps to 3–143 (RIFAYCRIST…SGIVRARGAG (141 aa)). Ser11 (O-(5'-phospho-DNA)-serine intermediate) is an active-site residue.

It belongs to the site-specific recombinase resolvase family.

In Escherichia coli (strain K12), this protein is Serine recombinase PinR (pinR).